Reading from the N-terminus, the 1601-residue chain is Polycomb group protein Psc (1601 aa).

Disordered stretches follow at residues 1–91 (MMTP…TTTT) and 165–245 (NGIK…DLAT). Low complexity-rich tracts occupy residues 8–91 (AIQP…TTTT) and 182–198 (SSSSSSSSSSSSSSSSS). Over residues 199–215 (WPTTRRATSEDASSNGG) the composition is skewed to polar residues. Positions 228–245 (TAAVAASSTATTTSDLAT) are enriched in low complexity. The segment at 263-302 (CHLCQGYLINATTIVECLHSFCHSCLINHLRKERFCPRCE) adopts an RING-type zinc-finger fold. Disordered regions lie at residues 561 to 693 (KREK…FSED), 711 to 856 (VESP…NRTP), 895 to 960 (IGGG…SNNY), 1011 to 1097 (YKYT…EKQQ), 1116 to 1315 (SITI…LAPK), 1330 to 1408 (NPAA…HPVM), and 1512 to 1601 (AATG…TKSK). Over residues 567–590 (SPQMSSKSSSKSSPCTPVSSPSEP) the composition is skewed to low complexity. Positions 611 to 637 (DPERREIVKPLKPEKESRSKKKDKDGS) are enriched in basic and acidic residues. The span at 638-649 (PKSSSSSSSSSS) shows a compositional bias: low complexity. A phosphoserine mark is found at serine 656 and serine 658. Residues 676–689 (SGVSTLSPRVTSGA) show a composition bias toward polar residues. Residues 729-739 (SVQQSASPKSK) are compositionally biased toward low complexity. A compositionally biased stretch (pro residues) spans 812–822 (LMPPPAKPPML). A compositionally biased stretch (polar residues) spans 929 to 938 (TTPSQGNKNV). The segment covering 1011–1022 (YKYTPKPTPNSG) has biased composition (low complexity). The segment covering 1036 to 1045 (LGGGNGGSLG) has biased composition (gly residues). Residues 1069–1085 (SSATQSGGNNGIVNNNI) are compositionally biased toward low complexity. A compositionally biased stretch (polar residues) spans 1116-1133 (SITISRDNGDSSSPNNGQ). Serine 1139 bears the Phosphoserine mark. Pro residues predominate over residues 1204–1217 (PQLPKVATPPPPSS). Phosphothreonine occurs at positions 1222, 1236, and 1251. Residues 1247–1258 (VDKKTPSPEKRT) show a composition bias toward basic and acidic residues. Phosphoserine is present on residues serine 1253, serine 1266, and serine 1274. Polar residues predominate over residues 1261-1272 (QMGSHSPTASEN). Composition is skewed to polar residues over residues 1352 to 1375 (QSGQQKLVNGGQSQPAQQKTSPPA) and 1561 to 1587 (APQTKGNSSSGAANARQQTAATGNNGA).

In terms of assembly, component of PRC1 complex, which contains many PcG proteins like Pc, ph, Scm, Psc, Sce and also chromatin-remodeling proteins such as histone deacetylases. This complex is distinct from the Esc/E(z) complex, at least composed of esc, E(z), Su(z)12, HDAC1/Rpd3 and Caf1-55. The 2 complexes however cooperate and interact together during the first 3 hours of development to establish PcG silencing.

Its subcellular location is the nucleus. Functionally, polycomb group (PcG) protein. PcG proteins act by forming multiprotein complexes, which are required to maintain the transcriptionally repressive state of homeotic genes throughout development. PcG proteins are not required to initiate repression, but to maintain it during later stages of development. Component of the PcG multiprotein PRC1 complex, a complex that acts via chromatin remodeling and modification of histones; it mediates monoubiquitination of histone H2A 'Lys-118', rendering chromatin heritably changed in its expressibility. Needed to maintain expression patterns of the homeotic selector genes of the Antennapedia (Antp-C) and Bithorax (BX-C) complexes, and hence for the maintenance of segmental determination. The chain is Polycomb group protein Psc (Psc) from Drosophila melanogaster (Fruit fly).